A 393-amino-acid polypeptide reads, in one-letter code: Methylthioribose kinase (393 aa).

ATP is bound by residues N38, K53, and 107–109 (EDL). Residue D225 coordinates substrate. 242–244 (DPE) is a binding site for ATP. Substrate is bound at residue R332.

The protein belongs to the methylthioribose kinase family. Homodimer.

It carries out the reaction 5-(methylsulfanyl)-D-ribose + ATP = 5-(methylsulfanyl)-alpha-D-ribose 1-phosphate + ADP + H(+). Its pathway is amino-acid biosynthesis; L-methionine biosynthesis via salvage pathway; S-methyl-5-thio-alpha-D-ribose 1-phosphate from S-methyl-5'-thioadenosine (hydrolase route): step 2/2. Catalyzes the phosphorylation of methylthioribose into methylthioribose-1-phosphate. This Bacillus cereus (strain AH820) protein is Methylthioribose kinase.